A 998-amino-acid polypeptide reads, in one-letter code: Type II restriction enzyme and methyltransferase RM.Eco57I (998 aa).

The protein in the C-terminal section; belongs to the N(4)/N(6)-methyltransferase family. As to quaternary structure, monomer.

It catalyses the reaction Endonucleolytic cleavage of DNA to give specific double-stranded fragments with terminal 5'-phosphates.. It carries out the reaction a 2'-deoxyadenosine in DNA + S-adenosyl-L-methionine = an N(6)-methyl-2'-deoxyadenosine in DNA + S-adenosyl-L-homocysteine + H(+). Mg(2+) is absolutely required for DNA restriction. Functionally, an E, G and S subtype restriction enzyme that recognizes the (non-palindromic) double-stranded sequence 5'-CTGAAG-3' and cleaves respectively 22 bases after C-1 and 14 bases before C'-1; cleavage of lambda DNA is never complete. Also acts as a methylase that causes specific methylation on A-5 in 5'-CTGAAG-3', the other strand is methylated by the M.Eco57I methylase. The polypeptide is Type II restriction enzyme and methyltransferase RM.Eco57I (Escherichia coli).